A 497-amino-acid polypeptide reads, in one-letter code: Zinc finger protein ZIC 2-B (497 aa).

Disordered stretches follow at residues 58–107 (HMGA…TSQA) and 143–180 (SAAA…PQGH). Positions 66–88 (PGGGSGGGSGGGGGAGPNGGAGA) are enriched in gly residues. The segment covering 97 to 107 (PGQTSAFTSQA) has biased composition (polar residues). A compositionally biased stretch (basic residues) spans 161–171 (LHHHPHHHHQL). The segment at 273-308 (LICKWIDPEQLNNPKKSCNKTFSTMHELVTHMSVEH) adopts a C2H2-type 1; atypical zinc-finger fold. The C2H2-type 2; atypical zinc finger occupies 317–344 (HICFWEECAREGKPFKAKYKLVNHIRVH). C2H2-type zinc fingers lie at residues 350 to 374 (FPCP…KRTH), 380 to 404 (FQCE…MHVH), and 410 to 432 (YLCK…MKVH). The disordered stretch occupies residues 423–473 (SSLRKHMKVHESSPQGSESSPAASSGYESSTPPGLVSPNSETQNPNLSPAA). The span at 434-452 (SSPQGSESSPAASSGYESS) shows a compositional bias: low complexity. Residues 459 to 469 (SPNSETQNPNL) are compositionally biased toward polar residues.

It belongs to the GLI C2H2-type zinc-finger protein family.

The protein resides in the nucleus. Its subcellular location is the cytoplasm. In terms of biological role, transcriptional repressor that inhibits neurogenesis and induces neural and neural crest differentiation. Regulates anteroposterior patterning in early development by inhibiting expression of the nodal genes through the inhibition of vegt. Required for gastrulation movements and for proper anterior neural and axial development. May also act as a transcriptional activator. May bind to the minimal GLI-consensus sequence 5'-TGGGTGGTC-3'. The sequence is that of Zinc finger protein ZIC 2-B (zic2-b) from Xenopus laevis (African clawed frog).